Reading from the N-terminus, the 371-residue chain is 4-hydroxy-3-methylbut-2-en-1-yl diphosphate synthase (flavodoxin) (371 aa).

[4Fe-4S] cluster-binding residues include C270, C273, C305, and E312.

This sequence belongs to the IspG family. Requires [4Fe-4S] cluster as cofactor.

The catalysed reaction is (2E)-4-hydroxy-3-methylbut-2-enyl diphosphate + oxidized [flavodoxin] + H2O + 2 H(+) = 2-C-methyl-D-erythritol 2,4-cyclic diphosphate + reduced [flavodoxin]. Its pathway is isoprenoid biosynthesis; isopentenyl diphosphate biosynthesis via DXP pathway; isopentenyl diphosphate from 1-deoxy-D-xylulose 5-phosphate: step 5/6. Functionally, converts 2C-methyl-D-erythritol 2,4-cyclodiphosphate (ME-2,4cPP) into 1-hydroxy-2-methyl-2-(E)-butenyl 4-diphosphate. This Shewanella baltica (strain OS223) protein is 4-hydroxy-3-methylbut-2-en-1-yl diphosphate synthase (flavodoxin).